Consider the following 335-residue polypeptide: Mitochondrial uncoupling protein 4C (335 aa).

Solcar repeat units lie at residues 34–125, 137–229, and 238–329; these read RNLF…FRRP, LKIY…SKRT, and EGLP…LRQW. 6 helical membrane-spanning segments follow: residues 40–57, 100–118, 138–157, 204–223, 244–264, and 304–323; these read YVNT…VFPL, GFSA…RVVL, KIYM…QALA, GVGP…VGSY, FVSS…ADVI, and GLMP…WLSV.

This sequence belongs to the mitochondrial carrier (TC 2.A.29) family.

It localises to the mitochondrion inner membrane. In terms of biological role, mitochondrial protein that is likely to be responsible for thermogenic respiration. Likely to function in mitochondrial uncoupling i.e. creating mitochondrial proton leaks across the inner mitochondrial membrane and can therefore dissipate the mitochondrial proton gradient and convert the energy of substrate oxidation into heat instead of ATP. Involved in cold tolerance, it is required for development to the adult stage at low temperatures. This chain is Mitochondrial uncoupling protein 4C, found in Drosophila melanogaster (Fruit fly).